The primary structure comprises 732 residues: mRNA-binding protein puf3 (732 aa).

Residues 98 to 123 (PDSLVSTPTAPSANHHGNPFPNGKQS) are disordered. Residues 100-109 (SLVSTPTAPS) show a composition bias toward polar residues. The region spanning 376-716 (QQSRVLYLFH…HLIMSVERFR (341 aa)) is the PUM-HD domain. Pumilio repeat units lie at residues 396–431 (DILG…AVFQ), 432–468 (EIAS…ILLS), 469–504 (QIKG…QLIQ), 505–540 (ELDG…FILR), 541–576 (ALRP…IIEE), 577–611 (LLPH…YIFD), 612–647 (LMID…RILN), and 655–690 (ENCS…LLIS).

Belongs to the PUF3 family.

Its subcellular location is the mitochondrion outer membrane. It is found in the cytoplasm. In terms of biological role, RNA-binding protein involved in post-transcriptional regulation. Predominantly binds to mRNAs encoding mitochondrial proteins and localizes them to the vicinity of mitochondria for translation. Regulates mitochondrial biogenesis, motility and morphology. The protein is mRNA-binding protein puf3 (puf3) of Schizosaccharomyces pombe (strain 972 / ATCC 24843) (Fission yeast).